Consider the following 253-residue polypeptide: 5-oxoprolinase subunit A (253 aa).

The protein belongs to the LamB/PxpA family. Forms a complex composed of PxpA, PxpB and PxpC.

It carries out the reaction 5-oxo-L-proline + ATP + 2 H2O = L-glutamate + ADP + phosphate + H(+). Its function is as follows. Catalyzes the cleavage of 5-oxoproline to form L-glutamate coupled to the hydrolysis of ATP to ADP and inorganic phosphate. The polypeptide is 5-oxoprolinase subunit A (Bacillus cereus (strain AH820)).